The sequence spans 588 residues: Glutamate--tRNA ligase (588 aa).

Positions 112-122 (PNPDFYLHLGS) match the 'HIGH' region motif.

It belongs to the class-I aminoacyl-tRNA synthetase family. Glutamate--tRNA ligase type 2 subfamily.

It is found in the cytoplasm. It catalyses the reaction tRNA(Glu) + L-glutamate + ATP = L-glutamyl-tRNA(Glu) + AMP + diphosphate. Catalyzes the attachment of glutamate to tRNA(Glu) in a two-step reaction: glutamate is first activated by ATP to form Glu-AMP and then transferred to the acceptor end of tRNA(Glu). The protein is Glutamate--tRNA ligase of Caldivirga maquilingensis (strain ATCC 700844 / DSM 13496 / JCM 10307 / IC-167).